We begin with the raw amino-acid sequence, 495 residues long: Pre-glycoprotein polyprotein GP complex (495 aa).

The N-myristoyl glycine; by host moiety is linked to residue Gly-2. The Extracellular portion of the chain corresponds to 2–17 (GQIITFFQEVPHIIEE). The chain crosses the membrane as a helical span at residues 18–33 (VMNIVLITLSLLAILK). Topologically, residues 34–58 (GVYNVMTCGLIGLISFLLLCGKSCS) are cytoplasmic. Cys-57 serves as a coordination point for Zn(2+). Residues 59-436 (LIYKDTYNFS…QGKTPLGLVD (378 aa)) are Extracellular-facing. Asn-78, Asn-88, Asn-107, Asn-117, and Asn-165 each carry an N-linked (GlcNAc...) asparagine; by host glycan. 6 disulfide bridges follow: Cys-85-Cys-235, Cys-116-Cys-153, Cys-178-Cys-216, Cys-283-Cys-296, Cys-305-Cys-314, and Cys-368-Cys-389. Asn-228 carries an N-linked (GlcNAc...) asparagine; by host glycan. Residues Asn-369, Asn-377, Asn-394, and Asn-399 are each glycosylated (N-linked (GlcNAc...) asparagine; by host). The chain crosses the membrane as a helical span at residues 437–457 (LFIFSTSFYSITVFLHLIKIP). Residues 458 to 495 (THRHIVGQGCPKPHRLNSRAICSCGAYKQPGLPTKWKR) are Cytoplasmic-facing. Zn(2+) is bound by residues His-459, His-461, Cys-467, His-471, Cys-479, and Cys-481.

This sequence belongs to the arenaviridae GPC protein family. Interacts with glycoprotein G2. Part of the GP complex (GP-C) together with glycoprotein G1 and glycoprotein G2. The GP-complex interacts with protein Z, which interacts with ribonucleocapsid; these interactions may induce virion budding. In terms of assembly, homotrimer; disulfide-linked. In pre-fusion state, G1 homotrimers bind G2 homotrimers via ionic interactions. Part of the GP complex (GP-C) together with glycoprotein G2 and the stable signal peptide. The GP-complex interacts with protein Z, which interacts with ribonucleocapsid; these interactions may induce virion budding. As to quaternary structure, homotrimer. Interacts with the stable signal peptide. In pre-fusion state, G2 homotrimers bind G1 homotrimers via ionic interactions. Part of the GP complex (GP-C) together with glycoprotein G1 and the stable signal peptide. Acidification in the endosome triggers rearrangements, which ultimately leads to a 6 helix bundle formed by the two heptad repeat domains (HR1 and HR2) in post-fusion state. The GP-complex interacts with protein Z, which interacts with ribonucleocapsid; these interactions may induce virion budding. In terms of processing, specific enzymatic cleavages in vivo yield mature proteins. GP-C polyprotein is cleaved in the endoplasmic reticulum by the host protease MBTPS1. Only cleaved glycoprotein is incorporated into virions. Post-translationally, the SSP remains stably associated with the GP complex following cleavage by signal peptidase and plays crucial roles in the trafficking of GP through the secretory pathway. Myristoylation is necessary for GP2-mediated fusion activity.

Its subcellular location is the virion membrane. The protein localises to the host endoplasmic reticulum membrane. It localises to the host Golgi apparatus membrane. The protein resides in the host cell membrane. In terms of biological role, functions as a cleaved signal peptide that is retained as the third component of the GP complex (GP-C). Helps to stabilize the spike complex in its native conformation. The SSP is required for efficient glycoprotein expression, post-translational maturation cleavage of G1 and G2, glycoprotein transport to the cell surface plasma membrane, formation of infectious virus particles, and acid pH-dependent glycoprotein-mediated cell fusion. Its function is as follows. Forms the virion spikes together with glycoprotein G2. The glycoprotein spike trimers are connected to the underlying matrix. Mediates virus attachment to host receptor alpha-dystroglycan DAG1. This interaction leads to virion entry into the host cell through the endosomal pathway. Forms the virion spikes together with glycoprotein G1. The glycoprotein spike trimers are connected to the underlying matrix. Class I viral fusion protein that directs fusion of viral and host endosomal membranes, leading to delivery of the nucleocapsid into the cytoplasm. Membrane fusion is mediated by irreversible conformational changes induced by acidification. This Ippy mammarenavirus (isolate Rat/Central African Republic/Dak An B 188 d/1970) (IPPYV) protein is Pre-glycoprotein polyprotein GP complex.